The chain runs to 92 residues: Defensin alpha 4 (92 aa).

The signal sequence occupies residues 1-19; the sequence is MKTLVLLSALVLLAFQVQA. Residues 20 to 58 constitute a propeptide that is removed on maturation; that stretch reads DPIQNTDEETKTEEQPGEEDQAVSISFGGQEGSALHEKS. A disordered region spans residues 23–42; that stretch reads QNTDEETKTEEQPGEEDQAV. 3 disulfides stabilise this stretch: cysteine 64–cysteine 89, cysteine 66–cysteine 81, and cysteine 71–cysteine 88.

Belongs to the alpha-defensin family. As to expression, paneth cells of the small bowel.

The protein resides in the secreted. The protein localises to the cytoplasmic vesicle. It is found in the secretory vesicle. In terms of biological role, host-defense peptide that has antimicrobial activity. Exhibits activity against Gram-negative E.coli (in vitro). Probably contributes to the antimicrobial barrier function of the small bowel mucosa. This Mus musculus (Mouse) protein is Defensin alpha 4.